Here is a 528-residue protein sequence, read N- to C-terminus: Na(+)/H(+) antiporter NhaB (528 aa).

11 helical membrane passes run 23-45, 66-86, 95-115, 130-164, 203-223, 241-261, 310-330, 349-369, 390-410, 448-468, and 475-495; these read FAIL…IAGW, PGGL…TQVL, VLLL…LLLY, VSML…FYSI, LLMH…VGEP, IRMS…CFIV, LIVG…SVII, EEAL…GVII, LVIF…VFVG, ATPN…APLI, and MVMM…LAIE.

The protein belongs to the NhaB Na(+)/H(+) (TC 2.A.34) antiporter family.

The protein localises to the cell inner membrane. It carries out the reaction 2 Na(+)(in) + 3 H(+)(out) = 2 Na(+)(out) + 3 H(+)(in). Functionally, na(+)/H(+) antiporter that extrudes sodium in exchange for external protons. In Shewanella amazonensis (strain ATCC BAA-1098 / SB2B), this protein is Na(+)/H(+) antiporter NhaB.